The following is a 270-amino-acid chain: Aliphatic sulfonates import ATP-binding protein SsuB 3 (270 aa).

Residues 17–238 enclose the ABC transporter domain; that stretch reads LAVQNLKKAF…ARGSHRLAAL (222 aa). 49-56 is an ATP binding site; that stretch reads GRSGCGKS.

It belongs to the ABC transporter superfamily. Aliphatic sulfonates importer (TC 3.A.1.17.2) family. As to quaternary structure, the complex is composed of two ATP-binding proteins (SsuB), two transmembrane proteins (SsuC) and a solute-binding protein (SsuA).

The protein resides in the cell inner membrane. It catalyses the reaction ATP + H2O + aliphatic sulfonate-[sulfonate-binding protein]Side 1 = ADP + phosphate + aliphatic sulfonateSide 2 + [sulfonate-binding protein]Side 1.. Functionally, part of the ABC transporter complex SsuABC involved in aliphatic sulfonates import. Responsible for energy coupling to the transport system. The protein is Aliphatic sulfonates import ATP-binding protein SsuB 3 of Pseudomonas syringae pv. tomato (strain ATCC BAA-871 / DC3000).